The following is a 364-amino-acid chain: Adenine deaminase (364 aa).

Zn(2+)-binding residues include His25, His27, and His221. The Proton donor role is filled by Glu224. Asp301 contributes to the Zn(2+) binding site. A substrate-binding site is contributed by Asp302.

Belongs to the metallo-dependent hydrolases superfamily. Adenosine and AMP deaminases family. Adenine deaminase type 2 subfamily. Requires Zn(2+) as cofactor.

The protein resides in the cytoplasm. The protein localises to the nucleus. The enzyme catalyses adenine + H2O + H(+) = hypoxanthine + NH4(+). Functionally, catalyzes the hydrolytic deamination of adenine to hypoxanthine. Plays an important role in the purine salvage pathway and in nitrogen catabolism. Has no activity with adenosine as a substrate. The protein is Adenine deaminase (aah1) of Emericella nidulans (strain FGSC A4 / ATCC 38163 / CBS 112.46 / NRRL 194 / M139) (Aspergillus nidulans).